The primary structure comprises 111 residues: BET1-like protein (111 aa).

Topologically, residues 1–86 (MADWARAQSP…MARSGQDNRK (86 aa)) are cytoplasmic. Serine 9 and serine 37 each carry phosphoserine. The t-SNARE coiled-coil homology domain maps to 15–77 (EILDRENKRM…TGSVKRFSTM (63 aa)). A helical; Anchor for type IV membrane protein transmembrane segment spans residues 87 to 107 (LLCGMAVGLIVAFFILSYFLS). Over 108–111 (RART) the chain is Lumenal.

In terms of assembly, component of a SNARE complex consisting of STX5, YKT6, GOSR1 and BET1L. Interacts with STX5.

The protein resides in the golgi apparatus membrane. Its subcellular location is the golgi apparatus. It is found in the trans-Golgi network membrane. Its function is as follows. Vesicle SNARE required for targeting and fusion of retrograde transport vesicles with the Golgi complex. Required for the integrity of the Golgi complex. This is BET1-like protein from Homo sapiens (Human).